We begin with the raw amino-acid sequence, 583 residues long: Complement factor I (583 aa).

Residues 1-18 (MKLLHVFLLFLCFHLRFC) form the signal peptide. Cystine bridges form between cysteine 33–cysteine 255, cysteine 43–cysteine 54, cysteine 48–cysteine 59, cysteine 61–cysteine 93, cysteine 67–cysteine 86, cysteine 75–cysteine 106, cysteine 141–cysteine 181, cysteine 154–cysteine 214, cysteine 186–cysteine 196, cysteine 229–cysteine 247, cysteine 241–cysteine 256, cysteine 259–cysteine 271, cysteine 266–cysteine 284, cysteine 278–cysteine 293, cysteine 327–cysteine 453, cysteine 365–cysteine 381, and cysteine 373–cysteine 444. In terms of domain architecture, Kazal-like spans 55-108 (IEGTCVCKLPYQCPKNGTAVCATNRRSFPTYCQQKSLECLHPGTKFLNNGTCTA). Residue asparagine 70 is glycosylated (N-linked (GlcNAc...) asparagine). Asparagine 103 carries N-linked (GlcNAc...) (complex) asparagine glycosylation. Residues 114–212 (VSLKHGNTDS…TMGYQDFADV (99 aa)) enclose the SRCR domain. An N-linked (GlcNAc...) asparagine glycan is attached at asparagine 177. 2 consecutive LDL-receptor class A domains span residues 213-257 (VCYT…LCCK) and 258-294 (ACQG…VGCA). Ca(2+) is bound by residues lysine 239, aspartate 242, isoleucine 244, aspartate 246, aspartate 252, and glutamate 253. The Ca(2+) site is built by tyrosine 276, asparagine 279, glutamate 281, aspartate 283, aspartate 289, and glutamate 290. Residues 340–574 (IVGGKRAQLG…YFDWISYHVG (235 aa)) form the Peptidase S1 domain. Active-site charge relay system residues include histidine 380 and aspartate 429. N-linked (GlcNAc...) asparagine glycans are attached at residues asparagine 464 and asparagine 494. Disulfide bonds link cysteine 467-cysteine 531, cysteine 495-cysteine 510, and cysteine 521-cysteine 550. The Charge relay system role is filled by serine 525. A glycan (N-linked (GlcNAc...) asparagine) is linked at asparagine 536.

This sequence belongs to the peptidase S1 family. Heterodimer of a light and heavy chains; disulfide-linked. The fully processed and mature protein circulates as a zymogen, and is allosterically activated by substrate-induced remodeling of the active site. Interacts with C3b. Interacts with complement factor H. As to quaternary structure, (Microbial infection) Interacts with Staphylococcus aureus clumping factor A/ClfA; this interaction enhances cleavage of C3b into iC3b by CFI. As to expression, expressed in the liver by hepatocytes. Also present in other cells such as monocytes, fibroblasts or keratinocytes.

The protein resides in the secreted. Its subcellular location is the extracellular space. It catalyses the reaction Inactivates complement subcomponents C3b, iC3b and C4b by proteolytic cleavage.. Trypsin-like serine protease that plays an essential role in regulating the immune response by controlling all complement pathways. Inhibits these pathways by cleaving three peptide bonds in the alpha-chain of C3b and two bonds in the alpha-chain of C4b thereby inactivating these proteins. Essential cofactors for these reactions include factor H and C4BP in the fluid phase and membrane cofactor protein/CD46 and CR1 on cell surfaces. The presence of these cofactors on healthy cells allows degradation of deposited C3b by CFI in order to prevent undesired complement activation, while in apoptotic cells or microbes, the absence of such cofactors leads to C3b-mediated complement activation and subsequent opsonization. The protein is Complement factor I (CFI) of Homo sapiens (Human).